The sequence spans 303 residues: 4-sulfomuconolactone hydrolase (303 aa).

The protein belongs to the metallo-dependent hydrolases superfamily. Sulfomuconolactone hydrolase family. As to quaternary structure, monomer. Zn(2+) serves as cofactor.

It catalyses the reaction 4-sulfomuconolactone + H2O = maleylacetate + sulfite + 2 H(+). Its activity is regulated as follows. Completely inhibited by ZnCl(2) and CuCl(2). Its function is as follows. Involved in the degradation of 4-sulfocatechol which is a central intermediate in the degradation of substituted sulfonated benzenes. Catalyzes the hydrolytical desulfonation of 4-sulfomuconolactone to yield maleylacetate. The polypeptide is 4-sulfomuconolactone hydrolase (Hydrogenophaga intermedia).